The chain runs to 456 residues: tRNA modification GTPase MnmE (456 aa).

Arg-21, Glu-85, and Lys-124 together coordinate (6S)-5-formyl-5,6,7,8-tetrahydrofolate. Positions 220–379 constitute a TrmE-type G domain; the sequence is QFRIVLYGEP…LLDAIKERTG (160 aa). Asn-230 provides a ligand contact to K(+). GTP contacts are provided by residues 230 to 235, 249 to 255, and 274 to 277; these read NTGKSS, SEIPGTT, and DTAG. Ser-234 is a binding site for Mg(2+). K(+) is bound by residues Ser-249, Ile-251, and Thr-254. A Mg(2+)-binding site is contributed by Thr-255. Lys-456 contributes to the (6S)-5-formyl-5,6,7,8-tetrahydrofolate binding site.

This sequence belongs to the TRAFAC class TrmE-Era-EngA-EngB-Septin-like GTPase superfamily. TrmE GTPase family. As to quaternary structure, homodimer. Heterotetramer of two MnmE and two MnmG subunits. Requires K(+) as cofactor.

Its subcellular location is the cytoplasm. Exhibits a very high intrinsic GTPase hydrolysis rate. Involved in the addition of a carboxymethylaminomethyl (cmnm) group at the wobble position (U34) of certain tRNAs, forming tRNA-cmnm(5)s(2)U34. The protein is tRNA modification GTPase MnmE of Leptospira interrogans serogroup Icterohaemorrhagiae serovar copenhageni (strain Fiocruz L1-130).